The sequence spans 498 residues: GPI mannosyltransferase 4 (498 aa).

A run of 9 helical transmembrane segments spans residues 4–24, 60–80, 118–134, 135–155, 169–189, 208–228, 261–281, 286–303, and 332–352; these read AVIR…PAYV, FAPL…FNAG, AFLL…QSHT, FSNS…EVVI, GVLG…AGYL, LAAL…IDTL, YTHI…FALG, LSLP…LSLF, and LTLT…IMGV. An N-linked (GlcNAc...) asparagine glycan is attached at asparagine 429.

It belongs to the glycosyltransferase 22 family. PIGZ subfamily.

The protein resides in the endoplasmic reticulum membrane. It participates in glycolipid biosynthesis; glycosylphosphatidylinositol-anchor biosynthesis. In terms of biological role, alpha-1,2-mannosyltransferase involved in glycosylphosphatidylinositol-anchor biosynthesis. Transfers a fourth mannose to trimannosyl-GPIs during GPI precursor assembly. The presence of a fourth mannose in GPI is essential in fungi. This Eremothecium gossypii (strain ATCC 10895 / CBS 109.51 / FGSC 9923 / NRRL Y-1056) (Yeast) protein is GPI mannosyltransferase 4 (SMP3).